Reading from the N-terminus, the 203-residue chain is MCLIMETDDHNGDVLAPPSNFSMVEDGIYRSGFPRPENFSFLKTLNLRSIIYLCPEPYPEENLKFLEANNIKLYQFGIEGKTDPPTPMPKDTVLDALKVLVDVRNHPILIHCKRGKHRTGCLVGCLRKVQSWCLSSVLEEYQKNAGLKWRQRDLNFIEAFDIVSLRQCLLSIMYQYHGYGFKRRRLAYEEENVKTPKPQAARV.

The 150-residue stretch at 20 to 169 (NFSMVEDGIY…FDIVSLRQCL (150 aa)) folds into the Tyrosine-protein phosphatase domain. The tract at residues 76–88 (FGIEGKTDPPTPM) is WPD loop important for active site topology. C112 serves as the catalytic Phosphocysteine intermediate.

The protein belongs to the protein-tyrosine phosphatase family. Atypical dual-specificity phosphatase Siw14-like subfamily. In terms of assembly, interacts with FLZ1. Highly expressed in roots, stems and flowers. Expressed at low levels in leaves and siliques.

The protein resides in the nucleus. It carries out the reaction 5-diphospho-1D-myo-inositol 1,2,3,4,6-pentakisphosphate + H2O = 1D-myo-inositol hexakisphosphate + phosphate + H(+). The enzyme catalyses 1,5-bis(diphospho)-1D-myo-inositol 2,3,4,6-tetrakisphosphate + H2O = 1-diphospho-1D-myo-inositol 2,3,4,5,6-pentakisphosphate + phosphate + 2 H(+). It catalyses the reaction 3,5-bis(diphospho)-1D-myo-inositol 1,2,4,6-tetrakisphosphate + H2O = 3-diphospho-1D-myo-inositol 1,2,4,5,6-pentakisphosphate + phosphate + 2 H(+). The catalysed reaction is 6-diphospho-1D-myo-inositol pentakisphosphate + H2O = 1D-myo-inositol hexakisphosphate + phosphate + H(+). In terms of biological role, cleaves the beta-phosphate at the 5-position of soluble inositol pyrophosphates. Has highest activity on 5-diphosphoinositol 1,2,3,4,6-pentakisphosphate (5-InsP(7)), 1,5-bis-diphosphoinositol 2,3,4,6-tetrakisphosphate (1,5-InsP(8)) and 3,5-InsP(8). Possesses phosphotyrosine phosphatase activity in vitro. Dephosphorylates the phosphoinositides PI(3,5)P2. Hydrolyzes para-nitrophenyl phosphate and O-methylfluorescein phosphate in vitro. The chain is Inositol diphosphatase DSP3 from Arabidopsis thaliana (Mouse-ear cress).